Here is a 106-residue protein sequence, read N- to C-terminus: Large ribosomal subunit protein uL23 (106 aa).

Belongs to the universal ribosomal protein uL23 family. As to quaternary structure, part of the 50S ribosomal subunit. Contacts protein L29, and trigger factor when it is bound to the ribosome.

One of the early assembly proteins it binds 23S rRNA. One of the proteins that surrounds the polypeptide exit tunnel on the outside of the ribosome. Forms the main docking site for trigger factor binding to the ribosome. The polypeptide is Large ribosomal subunit protein uL23 (Acinetobacter baumannii (strain AB307-0294)).